The sequence spans 352 residues: tRNA pseudouridine synthase D (352 aa).

Residue D81 is the Nucleophile of the active site. Residues 158 to 306 (GVPNYFGQQR…RHERRTLLLK (149 aa)) form the TRUD domain.

The protein belongs to the pseudouridine synthase TruD family.

The catalysed reaction is uridine(13) in tRNA = pseudouridine(13) in tRNA. Its function is as follows. Responsible for synthesis of pseudouridine from uracil-13 in transfer RNAs. The sequence is that of tRNA pseudouridine synthase D from Photobacterium profundum (strain SS9).